The following is a 140-amino-acid chain: Profilin-1 (140 aa).

Position 2 is an N-acetylalanine (Ala2). Ser28 carries the phosphoserine modification. A Glycyl lysine isopeptide (Lys-Gly) (interchain with G-Cter in SUMO2); alternate cross-link involves residue Lys54. Lys54 is covalently cross-linked (Glycyl lysine isopeptide (Lys-Gly) (interchain with G-Cter in ubiquitin); alternate). 2 positions are modified to phosphoserine: Ser57 and Ser85. Residues Lys105 and Lys108 each carry the N6-acetyllysine modification. Tyr129 carries the phosphotyrosine modification. Ser138 is subject to Phosphoserine; by ROCK1.

This sequence belongs to the profilin family. As to quaternary structure, found in a complex with XPO6, Ran, ACTB and PFN1. Interacts with ACTB. Interacts with VASP. Interacts with HTT. Interacts with SH3BGRL. Occurs in many kinds of cells as a complex with monomeric actin in a 1:1 ratio. Interacts with ACTMAP. Phosphorylation at Ser-138 reduces its affinity for G-actin and blocks its interaction with HTT, reducing its ability to inhibit androgen receptor (AR) and HTT aggregation. In terms of tissue distribution, expressed in epididymis (at protein level).

It localises to the cytoplasm. Its subcellular location is the cytoskeleton. Functionally, binds to actin and affects the structure of the cytoskeleton. At high concentrations, profilin prevents the polymerization of actin, whereas it enhances it at low concentrations. By binding to PIP2, it inhibits the formation of IP3 and DG. Inhibits androgen receptor (AR) and HTT aggregation and binding of G-actin is essential for its inhibition of AR. The sequence is that of Profilin-1 (PFN1) from Homo sapiens (Human).